The primary structure comprises 495 residues: Lysine--tRNA ligase (495 aa).

E406 and E413 together coordinate Mg(2+).

The protein belongs to the class-II aminoacyl-tRNA synthetase family. As to quaternary structure, homodimer. The cofactor is Mg(2+).

It is found in the cytoplasm. The catalysed reaction is tRNA(Lys) + L-lysine + ATP = L-lysyl-tRNA(Lys) + AMP + diphosphate. The chain is Lysine--tRNA ligase from Leptospira interrogans serogroup Icterohaemorrhagiae serovar Lai (strain 56601).